The sequence spans 423 residues: MDIDQYMTDLGRRARHASRAMARASTAAKNAALDAVARAIERDAQALKDANARDVARAREKGLDAAFIDRLTLSDKALNTMVEGLRQVASLADPIGEIGNLKFRPSGIQVGQMRVPLGVIGIIYESRPNVTIDAAALCLKSGNATILRGGSEALESNAALAKLIGEGLEAAGLPQDAVQVVATADRAAVGKLITMTEYVDVIVPRGGKSLIERLINEARVPMIKHLDGICHVYVDDRADLAKALTVCDNAKTHRYGTCNTMETLLVASGIAAKLLPPLGKLYRDKQVELRVDAAARAVLADAGVGPLVDVTEEDWHTEYLAPVLAIKVVDGLDAAIEHINHYGSHHTDAIVTEDHDRAMRFLREVDSASVMVNASTRFADGFEFGLGAEIGISNDKLHARGPVGLEGLTSLKYVVLGHGEGRQ.

Belongs to the gamma-glutamyl phosphate reductase family.

The protein localises to the cytoplasm. It catalyses the reaction L-glutamate 5-semialdehyde + phosphate + NADP(+) = L-glutamyl 5-phosphate + NADPH + H(+). The protein operates within amino-acid biosynthesis; L-proline biosynthesis; L-glutamate 5-semialdehyde from L-glutamate: step 2/2. Catalyzes the NADPH-dependent reduction of L-glutamate 5-phosphate into L-glutamate 5-semialdehyde and phosphate. The product spontaneously undergoes cyclization to form 1-pyrroline-5-carboxylate. This is Gamma-glutamyl phosphate reductase from Burkholderia orbicola (strain AU 1054).